A 328-amino-acid polypeptide reads, in one-letter code: 5,10-methylenetetrahydromethanopterin reductase (328 aa).

Belongs to the mer family.

Its subcellular location is the cytoplasm. The catalysed reaction is 5-methyl-5,6,7,8-tetrahydromethanopterin + oxidized coenzyme F420-(gamma-L-Glu)(n) + H(+) = 5,10-methylenetetrahydromethanopterin + reduced coenzyme F420-(gamma-L-Glu)(n). It participates in one-carbon metabolism; methanogenesis from CO(2); methyl-coenzyme M from 5,10-methylene-5,6,7,8-tetrahydromethanopterin: step 1/2. Its function is as follows. Catalyzes the reversible reduction of methylene-H(4)MPT to methyl-H(4)MPT. The sequence is that of 5,10-methylenetetrahydromethanopterin reductase from Methanosarcina barkeri (strain Fusaro / DSM 804).